The chain runs to 169 residues: MKYSTLAWLVIASYTVFAQDGTSVTGYTTTIVIPGSPPAGAGTAHGDTENTGTVHTTEHLTGTEETHTTGATPETTTIVAPTTTHENTTTHETSVENTATVHHNTTTLHHNTTTIHPNATGTETHTETGTGTLTGTGTEGPALTTTTVAEAFSLAAGASLGYLVALLFL.

An N-terminal signal peptide occupies residues 1–18 (MKYSTLAWLVIASYTVFA). Residues Asn87, Asn104, Asn111, and Asn118 are each glycosylated (N-linked (GlcNAc...) asparagine). Gly140 carries GPI-anchor amidated glycine lipidation. A propeptide spans 141–169 (PALTTTTVAEAFSLAAGASLGYLVALLFL) (removed in mature form).

It is found in the cell membrane. Putative adhesin which may be involved in cell adhesion and virulence. This Candida albicans (strain SC5314 / ATCC MYA-2876) (Yeast) protein is Probable GPI-anchored adhesin-like protein PGA22 (PGA22).